Consider the following 284-residue polypeptide: Nitrogenase iron protein 1 (284 aa).

17–24 (GKGGIGKS) serves as a coordination point for ATP. C105 contacts [4Fe-4S] cluster. The residue at position 108 (R108) is an ADP-ribosylarginine; by dinitrogenase reductase ADP-ribosyltransferase. A [4Fe-4S] cluster-binding site is contributed by C140.

Belongs to the NifH/BchL/ChlL family. In terms of assembly, homodimer. The cofactor is [4Fe-4S] cluster. Post-translationally, the reversible ADP-ribosylation of Arg-108 inactivates the nitrogenase reductase and regulates nitrogenase activity.

The catalysed reaction is N2 + 8 reduced [2Fe-2S]-[ferredoxin] + 16 ATP + 16 H2O = H2 + 8 oxidized [2Fe-2S]-[ferredoxin] + 2 NH4(+) + 16 ADP + 16 phosphate + 6 H(+). In terms of biological role, the key enzymatic reactions in nitrogen fixation are catalyzed by the nitrogenase complex, which has 2 components: the iron protein and the molybdenum-iron protein. In Methanothermococcus thermolithotrophicus (Methanococcus thermolithotrophicus), this protein is Nitrogenase iron protein 1 (nifH1).